A 304-amino-acid polypeptide reads, in one-letter code: Glutaminase (304 aa).

Residues S63, N114, E158, N165, Y189, Y240, and V258 each coordinate substrate.

This sequence belongs to the glutaminase family. In terms of assembly, homotetramer.

The enzyme catalyses L-glutamine + H2O = L-glutamate + NH4(+). The protein is Glutaminase of Shewanella amazonensis (strain ATCC BAA-1098 / SB2B).